We begin with the raw amino-acid sequence, 609 residues long: MRSNGCGDLREQNIDQQVQLCGWVDRRRDHGGVIFIDLRDRSGTVQITVDPDLGADAFTVAEHLRSETVLQVEGKVRARPGESLNDKLATGAVEVLASGITVLNSVKGNLPFPVSVHDEENTREELRLRHRYLDLRRKRMNDNLRLRAQTIQAARRFLEDAGFIEVETPVLTRSTPEGARDYLLPSRVCGGEWFALPQSPQLFKQLLMVGGIERYYQMARCFRDEDLRADRQPEFTQLDIEMSFMDQEQILELNESLICAIWKTVKGIELPRPFPRITWHDAMEHYGTDRPDTRYGMELTNVSDIVKDMGFKVFSGAVKAGGAVKCIAVPGGNDAVSNVRIKPGGDVFSEAQKAGAGGLAFIRVRDGGEIDTIGAIKDNLSDEQRQELLSRTGAEPGTLLLFGAGDTATVNKALDRVRQYLAKELGMVKADRDNDQWNFLWVVDFPMFEFNGDENRYEALHHPFCAPNAEDLGGDASKWSETLPGARAQAYDLVLNGLELGGGSLRIHDSTLQRQVLQTVGLTLEEAQEQFGFLMDALDVGAPPHGGLAFGVDRMVMLLAGEESIRDTIAFPKTQQARCLMTSAPGGVADKQLEELHVASTWVEPDQED.

Position 177 (Glu177) interacts with L-aspartate. The aspartate stretch occupies residues 201 to 204 (QLFK). Position 223 (Arg223) interacts with L-aspartate. ATP-binding positions include 223 to 225 (RDE) and Gln232. His461 lines the L-aspartate pocket. Glu499 contributes to the ATP binding site. Arg506 contributes to the L-aspartate binding site. 551–554 (GVDR) is an ATP binding site.

It belongs to the class-II aminoacyl-tRNA synthetase family. Type 1 subfamily. Homodimer.

The protein localises to the cytoplasm. The catalysed reaction is tRNA(Asx) + L-aspartate + ATP = L-aspartyl-tRNA(Asx) + AMP + diphosphate. In terms of biological role, aspartyl-tRNA synthetase with relaxed tRNA specificity since it is able to aspartylate not only its cognate tRNA(Asp) but also tRNA(Asn). Reaction proceeds in two steps: L-aspartate is first activated by ATP to form Asp-AMP and then transferred to the acceptor end of tRNA(Asp/Asn). The chain is Aspartate--tRNA(Asp/Asn) ligase from Synechococcus sp. (strain CC9605).